The following is a 406-amino-acid chain: Dual-specificity RNA methyltransferase RlmN (406 aa).

Glu-119 (proton acceptor) is an active-site residue. Residues 125–370 form the Radical SAM core domain; that stretch reads DKGRGTLCVS…AMVRRTRGDD (246 aa). Cysteines 132 and 375 form a disulfide. [4Fe-4S] cluster is bound by residues Cys-139, Cys-143, and Cys-146. S-adenosyl-L-methionine is bound by residues 192-193, Ser-224, 246-248, and Asn-332; these read GE and SLH. Cys-375 functions as the S-methylcysteine intermediate in the catalytic mechanism.

It belongs to the radical SAM superfamily. RlmN family. The cofactor is [4Fe-4S] cluster.

The protein resides in the cytoplasm. The enzyme catalyses adenosine(2503) in 23S rRNA + 2 reduced [2Fe-2S]-[ferredoxin] + 2 S-adenosyl-L-methionine = 2-methyladenosine(2503) in 23S rRNA + 5'-deoxyadenosine + L-methionine + 2 oxidized [2Fe-2S]-[ferredoxin] + S-adenosyl-L-homocysteine. It catalyses the reaction adenosine(37) in tRNA + 2 reduced [2Fe-2S]-[ferredoxin] + 2 S-adenosyl-L-methionine = 2-methyladenosine(37) in tRNA + 5'-deoxyadenosine + L-methionine + 2 oxidized [2Fe-2S]-[ferredoxin] + S-adenosyl-L-homocysteine. Specifically methylates position 2 of adenine 2503 in 23S rRNA and position 2 of adenine 37 in tRNAs. m2A2503 modification seems to play a crucial role in the proofreading step occurring at the peptidyl transferase center and thus would serve to optimize ribosomal fidelity. The sequence is that of Dual-specificity RNA methyltransferase RlmN from Xylella fastidiosa (strain 9a5c).